Here is a 374-residue protein sequence, read N- to C-terminus: Glutamate 5-kinase (374 aa).

Lys8 contacts ATP. The substrate site is built by Ser49, Asp136, and Asn148. ATP contacts are provided by residues Thr168 to Asp169 and Thr211 to Lys217. Residues Gln276 to Gly354 form the PUA domain.

This sequence belongs to the glutamate 5-kinase family.

The protein resides in the cytoplasm. The enzyme catalyses L-glutamate + ATP = L-glutamyl 5-phosphate + ADP. It functions in the pathway amino-acid biosynthesis; L-proline biosynthesis; L-glutamate 5-semialdehyde from L-glutamate: step 1/2. Functionally, catalyzes the transfer of a phosphate group to glutamate to form L-glutamate 5-phosphate. This chain is Glutamate 5-kinase, found in Picosynechococcus sp. (strain ATCC 27264 / PCC 7002 / PR-6) (Agmenellum quadruplicatum).